The sequence spans 197 residues: CASP-like protein 1B2 (197 aa).

Position 2 is an N-acetylalanine (Ala2). The Cytoplasmic portion of the chain corresponds to 2 to 17 (AREKIVVAGGTTKSWK). The chain crosses the membrane as a helical span at residues 18-38 (LLLGLRIFAFMATLAAAIVMS). Over 39–69 (LNKETKTLVVATIGTVPIKATLTAKFQHTPA) the chain is Extracellular. A helical membrane pass occupies residues 70–90 (FVFFVIANVMVSFHNLLMIVV). Residues 91–106 (QIFSRKLEYKGLRLLS) are Cytoplasmic-facing. The chain crosses the membrane as a helical span at residues 107-127 (IAILDMLNATLVSAAANAAVF). The Extracellular segment spans residues 128–156 (VAELGKNGNKHAKWNKVCDRFTTYCDHGA). A helical transmembrane segment spans residues 157-177 (GAIIAAFAGVILMLLVSAVSI). Residues 178-197 (SRLLINSKNFSTTATTTSVV) lie on the Cytoplasmic side of the membrane.

It belongs to the Casparian strip membrane proteins (CASP) family. Homodimer and heterodimers.

Its subcellular location is the cell membrane. The sequence is that of CASP-like protein 1B2 from Arabidopsis thaliana (Mouse-ear cress).